Reading from the N-terminus, the 213-residue chain is MSRNSYIQQSSDIQAAGGLVPMVIEQSARGERAYDIYSRLLKERVIFLVGPVEDYMANLVVAQMLFLEAENPDKDIHLYINSPGGSVTAGMSIYDTMQFIKPDVSTICIGQACSMGAFLLTAGAKGKRHCLPNSRVMIHQPLGGFQGQATDIQIHAQEILSIKARLNELLAYHTGQDLETIQRDTERDNFMSASRAAEYGLIDSVYDKRQLAS.

S114 acts as the Nucleophile in catalysis. H139 is an active-site residue.

It belongs to the peptidase S14 family. Fourteen ClpP subunits assemble into 2 heptameric rings which stack back to back to give a disk-like structure with a central cavity, resembling the structure of eukaryotic proteasomes.

Its subcellular location is the cytoplasm. The enzyme catalyses Hydrolysis of proteins to small peptides in the presence of ATP and magnesium. alpha-casein is the usual test substrate. In the absence of ATP, only oligopeptides shorter than five residues are hydrolyzed (such as succinyl-Leu-Tyr-|-NHMec, and Leu-Tyr-Leu-|-Tyr-Trp, in which cleavage of the -Tyr-|-Leu- and -Tyr-|-Trp bonds also occurs).. Its function is as follows. Cleaves peptides in various proteins in a process that requires ATP hydrolysis. Has a chymotrypsin-like activity. Plays a major role in the degradation of misfolded proteins. This chain is ATP-dependent Clp protease proteolytic subunit, found in Pseudomonas putida (strain GB-1).